A 373-amino-acid chain; its full sequence is MKIVVDENMPLAEALFAEFGEVVRVPGRTMTAEQLADADILLVRSVTKVNAALLSQATNLKFVGTATIGTDHIDKAVLAEKGINFTSAPGCNKVSVGEYIISALLVMAEKYQFSLSGLSLGVIGAGNTGTAVAERASALGIEVKLCDPLKEQAGDPRSFVSYDEALQCDLISFHVPLSREGEHATFHLLDKKYIQALRSEQILLNASRGEVWDNQAMLLRQQSAEPLLLVMDVWENEPDILHELVPYTDIATPHIAGYSLEGKYRGTYMLYEAFCQQFGYTVTKQLKQLLPVADINALTLNANTDEVVLKKLIHLVYDVRRDDARFRHQIGLPGRFDEMRKKYPERREWSSVTISSEQNNDELVKLGFSVSGN.

Serine 45 and threonine 67 together coordinate substrate. NAD(+)-binding positions include aspartate 147, 206–208 (ASR), and aspartate 232. Arginine 208 is an active-site residue. The active site involves glutamate 237. Residue histidine 254 is the Proton donor of the active site. An NAD(+)-binding site is contributed by glycine 257. Tyrosine 258 lines the substrate pocket.

It belongs to the D-isomer specific 2-hydroxyacid dehydrogenase family. PdxB subfamily. As to quaternary structure, homodimer.

The protein resides in the cytoplasm. It carries out the reaction 4-phospho-D-erythronate + NAD(+) = (R)-3-hydroxy-2-oxo-4-phosphooxybutanoate + NADH + H(+). It participates in cofactor biosynthesis; pyridoxine 5'-phosphate biosynthesis; pyridoxine 5'-phosphate from D-erythrose 4-phosphate: step 2/5. Catalyzes the oxidation of erythronate-4-phosphate to 3-hydroxy-2-oxo-4-phosphonooxybutanoate. This Tolumonas auensis (strain DSM 9187 / NBRC 110442 / TA 4) protein is Erythronate-4-phosphate dehydrogenase.